Consider the following 2070-residue polypeptide: HEAT repeat-containing protein 5B (2070 aa).

HEAT repeat units lie at residues 848-885, 1062-1099, and 1290-1327; these read EVRK…VVGE, VNLS…REAA, and LHLS…KFAS. At S1737 the chain carries Phosphoserine.

This sequence belongs to the HEATR5 family. Self-associates. Component of the aftiphilin/p200/gamma-synergin complex, at least composed of AFTPH/aftiphilin, HEATR5B/p200a and SYNRG/gamma-synergin, which plays a role in the AP1G1/AP-1-mediated protein trafficking from early to recycling endosomes and between the trans-Golgi network (TGN) and endosomes. Within the complex interacts with AFTPH/aftiphilin and SYNRG/gamma-synergin; the interactions are direct. Interacts with GGA1.

The protein localises to the cytoplasm. It localises to the perinuclear region. The protein resides in the cytoplasmic vesicle. Its subcellular location is the clathrin-coated vesicle. Functionally, component of clathrin-coated vesicles. Component of the aftiphilin/p200/gamma-synergin complex, which plays roles in AP1G1/AP-1-mediated protein trafficking including the trafficking of transferrin from early to recycling endosomes, and the membrane trafficking of furin and the lysosomal enzyme cathepsin D between the trans-Golgi network (TGN) and endosomes. The sequence is that of HEAT repeat-containing protein 5B (Heatr5b) from Mus musculus (Mouse).